The sequence spans 402 residues: uncharacterized protein (402 aa).

12 consecutive transmembrane segments (helical) span residues 23-43 (IVSVVMFTFIGYLTIGIPLAV), 52-72 (LGYGSVLAGLVISLQYLATLL), 90-110 (VLYGMAGSAASGLFMLLSVAI), 121-141 (LLVGRLVLGAAESLVGSAAIG), 158-178 (WNGIASYGAIALGAPLGVLLV), 180-200 (WLGLWSMGASIVLLGALGFAL), 228-248 (GMGLALGAIGFGTIATFITLY), 255-275 (ANAVLCLSAFGGCFIGARLLF), 282-302 (LGGFRVAIICLGVESLGLLLL), 309-329 (WVGLAGAALTGFGFSLVFPAF), 351-371 (LFVDLSLGITGPLVGFVANLF), and 375-395 (SMFLFACLASLGGLALAVALH).

Belongs to the major facilitator superfamily. YhhS family.

It localises to the cell inner membrane. This is an uncharacterized protein from Pseudomonas aeruginosa (strain ATCC 15692 / DSM 22644 / CIP 104116 / JCM 14847 / LMG 12228 / 1C / PRS 101 / PAO1).